The following is a 270-amino-acid chain: MGLLTPNSLPLLDVQHLTDEQTALAVERLNLFYGDKQVLHDISFCVPKHRVTALIGPSGCGKSTLLRCFNRMNDLLDNCHFDGEIRLGDEIITDKTTDVAALRRRVGMVFQRPNPFPKSIYENVVYGLRLQGVRDRRVLDEAVERSLRAAALWHEVKDRLRENAFRLSSGQQQRLVIARAIAIEPEVLLLDEPTSALDPISTLTIEELITTLKQQYTVVLVTHNMQQAARVSDYTAFIHQGRLVEYNNTDALFTSPYQRQTEDYITGRYG.

Positions 24-265 constitute an ABC transporter domain; sequence LAVERLNLFY…PYQRQTEDYI (242 aa). ATP is bound at residue 56 to 63; that stretch reads GPSGCGKS.

Belongs to the ABC transporter superfamily. Phosphate importer (TC 3.A.1.7) family. In terms of assembly, the complex is composed of two ATP-binding proteins (PstB), two transmembrane proteins (PstC and PstA) and a solute-binding protein (PstS).

Its subcellular location is the cell inner membrane. The enzyme catalyses phosphate(out) + ATP + H2O = ADP + 2 phosphate(in) + H(+). Its function is as follows. Part of the ABC transporter complex PstSACB involved in phosphate import. Responsible for energy coupling to the transport system. The protein is Phosphate import ATP-binding protein PstB 1 of Yersinia pestis bv. Antiqua (strain Antiqua).